Here is a 637-residue protein sequence, read N- to C-terminus: Interleukin-17 receptor E (637 aa).

An N-terminal signal peptide occupies residues 1-24 (MGSPRLAALLLSQPLLFICLAVSA). Residues 25 to 415 (QVACPCLPRW…LCPDVSHRHL (391 aa)) lie on the Extracellular side of the membrane. Asn-278 and Asn-307 each carry an N-linked (GlcNAc...) asparagine glycan. A helical membrane pass occupies residues 416 to 436 (GLLILALLGLTTLLGVVLVLF). Residues 437–637 (CRRLLPGPGR…TNSPCGFSCL (201 aa)) are Cytoplasmic-facing. Positions 447 to 583 (TRPVLLLHAA…LLRDLPRLLR (137 aa)) constitute an SEFIR domain.

Forms heterodimers with IL17RE; the heterodimer binds IL17C.

It is found in the cell membrane. Functionally, specific functional receptor for IL17C, signaling through the NF-kappa-B and MAPK pathways. Requires TRAF3IP2 /ACT1 for signaling. Crucial regulator in innate immunity to bacterial pathogens. In Rattus norvegicus (Rat), this protein is Interleukin-17 receptor E (Il17re).